The primary structure comprises 281 residues: Urease accessory protein UreD (281 aa).

The segment at 1–25 is disordered; that stretch reads MLNTLEPQPCETDALSPRLQRSTGS.

The protein belongs to the UreD family. UreD, UreF and UreG form a complex that acts as a GTP-hydrolysis-dependent molecular chaperone, activating the urease apoprotein by helping to assemble the nickel containing metallocenter of UreC. The UreE protein probably delivers the nickel.

It localises to the cytoplasm. Functionally, required for maturation of urease via the functional incorporation of the urease nickel metallocenter. This Dinoroseobacter shibae (strain DSM 16493 / NCIMB 14021 / DFL 12) protein is Urease accessory protein UreD.